A 184-amino-acid chain; its full sequence is ATP synthase subunit b, chloroplastic (184 aa).

Residues 27 to 49 (LATNPINLSVVFGVLIFFGKGVL) form a helical membrane-spanning segment.

This sequence belongs to the ATPase B chain family. In terms of assembly, F-type ATPases have 2 components, F(1) - the catalytic core - and F(0) - the membrane proton channel. F(1) has five subunits: alpha(3), beta(3), gamma(1), delta(1), epsilon(1). F(0) has four main subunits: a(1), b(1), b'(1) and c(10-14). The alpha and beta chains form an alternating ring which encloses part of the gamma chain. F(1) is attached to F(0) by a central stalk formed by the gamma and epsilon chains, while a peripheral stalk is formed by the delta, b and b' chains.

Its subcellular location is the plastid. It is found in the chloroplast thylakoid membrane. Functionally, f(1)F(0) ATP synthase produces ATP from ADP in the presence of a proton or sodium gradient. F-type ATPases consist of two structural domains, F(1) containing the extramembraneous catalytic core and F(0) containing the membrane proton channel, linked together by a central stalk and a peripheral stalk. During catalysis, ATP synthesis in the catalytic domain of F(1) is coupled via a rotary mechanism of the central stalk subunits to proton translocation. Its function is as follows. Component of the F(0) channel, it forms part of the peripheral stalk, linking F(1) to F(0). The polypeptide is ATP synthase subunit b, chloroplastic (Crucihimalaya wallichii (Rock-cress)).